Consider the following 751-residue polypeptide: Dachshund homolog 1 (751 aa).

Residues 1-178 (MAVPAALIPP…PSPVENTPQN (178 aa)) are disordered. 2 stretches are compositionally biased toward low complexity: residues 20-53 (ISTSASSSGTTTSTSSATSSPAPSIGPPASSGPT) and 61-74 (ASSASSSAAATVTS). Gly residues-rich tracts occupy residues 75–97 (PGGGGGGSGGGGGSGGNGGGGGS) and 107–119 (SSGGGVSAGGGGA). Positions 120 to 156 (SSTPITASTGSSSSSSSSSSSSSSSSSSSSSSSSSSS) are enriched in low complexity. Polar residues predominate over residues 167 to 178 (STPSPVENTPQN). Positions 182-268 (KMVDLRGAKV…LISRKDFETL (87 aa)) are DACHbox-N. The tract at residues 182 to 377 (KMVDLRGAKV…VGSSGGSWDK (196 aa)) is interaction with SIX6 and HDAC3. Disordered stretches follow at residues 273–295 (TNASSRPGRPPKRTQSVTSPENS), 351–393 (SNNQ…APVA), 467–525 (SPPS…RIPV), and 537–556 (MGLSPNVLPGPKEGDLAGHD). 2 stretches are compositionally biased toward polar residues: residues 285-294 (RTQSVTSPEN) and 351-369 (SNNQHGADSENGDMNSSVG). Residue Ser484 is modified to Phosphoserine. Residues 499–517 (SHPSSHRSSSVSSSPARTE) are compositionally biased toward low complexity. Positions 609–689 (SSIETLLTNI…KAKRKLQEAL (81 aa)) are DACHbox-C. The interaction with SIN3A stretch occupies residues 620–699 (GLLKVAIDNA…EFETKRREQA (80 aa)). The stretch at 623-711 (KVAIDNARAQ…TLKQAASADS (89 aa)) forms a coiled coil.

It belongs to the DACH/dachshund family. As to quaternary structure, interacts with SIX1, SIX6 and EYA3. Interacts with NCOR1 and HDAC3 through its N-terminus. Interacts with SIN3A through its C-terminus. Interacts with SMAD3 and SMAD4. As to expression, expressed at higher levels in adult kidney and lung, and at lower levels in brain and testis. Expressed in embryonal kidneys, eyes, cochleae and limb buds.

The protein resides in the nucleus. In terms of biological role, transcription factor that is involved in regulation of organogenesis. Seems to be a regulator of SIX1, SIX6 and probably SIX5. Corepression of precursor cell proliferation in myoblasts by SIX1 is switched to coactivation through recruitment of EYA3 to the SIX1-DACH1 complex. Transcriptional activation also seems to involve association of CREBBP. Seems to act as a corepressor of SIX6 in regulating proliferation by directly repressing cyclin-dependent kinase inhibitors, including the p27Kip1 promoter. Inhibits TGF-beta signaling through interaction with SMAD4 and NCOR1. Binds to chromatin DNA via its DACHbox-N domain. This chain is Dachshund homolog 1 (Dach1), found in Mus musculus (Mouse).